Here is a 324-residue protein sequence, read N- to C-terminus: Probable pectinesterase A (324 aa).

A signal peptide spans 1–19 (MHGSLLKLALLSFSLGSSA). Gln142 serves as a coordination point for substrate. Asp165 functions as the Proton donor in the catalytic mechanism. The active-site Nucleophile is the Asp186. Residues Arg246 and Trp248 each coordinate substrate. Asn285 is a glycosylation site (N-linked (GlcNAc...) asparagine).

This sequence belongs to the pectinesterase family.

It localises to the secreted. It catalyses the reaction [(1-&gt;4)-alpha-D-galacturonosyl methyl ester](n) + n H2O = [(1-&gt;4)-alpha-D-galacturonosyl](n) + n methanol + n H(+). It participates in glycan metabolism; pectin degradation; 2-dehydro-3-deoxy-D-gluconate from pectin: step 1/5. Its function is as follows. Involved in maceration and soft-rotting of plant tissue. The protein is Probable pectinesterase A (pmeA) of Aspergillus oryzae (strain ATCC 42149 / RIB 40) (Yellow koji mold).